A 152-amino-acid chain; its full sequence is Biogenesis of lysosome-related organelles complex 1 subunit 1 (152 aa).

It belongs to the BLOC1S1 family. As to quaternary structure, component of the biogenesis of lysosome-related organelles complex-1 (BLOC-1). Interacts with BLOS2 and SNX1. As to expression, expressed in the whole plant (at protein level).

Its subcellular location is the cytoplasm. It localises to the endosome. Component of the biogenesis of lysosome-related organelles complex-1 (BLOC-1), a complex that mediates the vacuolar degradative transport via the intracellular vesicle trafficking from the endosome to the vacuole. Probably regulates the PIN1 and PIN2 homeostasis through its interaction with SNX1. The chain is Biogenesis of lysosome-related organelles complex 1 subunit 1 (BLOS1) from Arabidopsis thaliana (Mouse-ear cress).